Consider the following 200-residue polypeptide: Holliday junction branch migration complex subunit RuvA (200 aa).

The segment at 1 to 63 (MYAYIKGTLT…EDAQLLYGFI (63 aa)) is domain I. The tract at residues 64-142 (NQEEKDMFLS…INDVDSSQIL (79 aa)) is domain II. The segment at 143 to 149 (NTDTQDH) is flexible linker. The interval 150-200 (ANAPIIKEALLALEALGYSKRELTKVEKSLSKETFDSVDDAVKRGLQLLIA) is domain III.

The protein belongs to the RuvA family. In terms of assembly, homotetramer. Forms an RuvA(8)-RuvB(12)-Holliday junction (HJ) complex. HJ DNA is sandwiched between 2 RuvA tetramers; dsDNA enters through RuvA and exits via RuvB. An RuvB hexamer assembles on each DNA strand where it exits the tetramer. Each RuvB hexamer is contacted by two RuvA subunits (via domain III) on 2 adjacent RuvB subunits; this complex drives branch migration. In the full resolvosome a probable DNA-RuvA(4)-RuvB(12)-RuvC(2) complex forms which resolves the HJ.

The protein resides in the cytoplasm. Its function is as follows. The RuvA-RuvB-RuvC complex processes Holliday junction (HJ) DNA during genetic recombination and DNA repair, while the RuvA-RuvB complex plays an important role in the rescue of blocked DNA replication forks via replication fork reversal (RFR). RuvA specifically binds to HJ cruciform DNA, conferring on it an open structure. The RuvB hexamer acts as an ATP-dependent pump, pulling dsDNA into and through the RuvAB complex. HJ branch migration allows RuvC to scan DNA until it finds its consensus sequence, where it cleaves and resolves the cruciform DNA. In Staphylococcus saprophyticus subsp. saprophyticus (strain ATCC 15305 / DSM 20229 / NCIMB 8711 / NCTC 7292 / S-41), this protein is Holliday junction branch migration complex subunit RuvA.